The primary structure comprises 385 residues: tRNA-specific 2-thiouridylase MnmA (385 aa).

Residues 18–25 and Leu44 contribute to the ATP site; that span reads AMSGGVDS. Catalysis depends on Cys112, which acts as the Nucleophile. Cys112 and Cys209 are disulfide-bonded. Position 136 (Gly136) interacts with ATP. An interaction with tRNA region spans residues 159–161; that stretch reads RDQ. The active-site Cysteine persulfide intermediate is the Cys209.

Belongs to the MnmA/TRMU family.

The protein localises to the cytoplasm. The enzyme catalyses S-sulfanyl-L-cysteinyl-[protein] + uridine(34) in tRNA + AH2 + ATP = 2-thiouridine(34) in tRNA + L-cysteinyl-[protein] + A + AMP + diphosphate + H(+). Its function is as follows. Catalyzes the 2-thiolation of uridine at the wobble position (U34) of tRNA, leading to the formation of s(2)U34. The polypeptide is tRNA-specific 2-thiouridylase MnmA (Methylorubrum extorquens (strain PA1) (Methylobacterium extorquens)).